Here is a 1384-residue protein sequence, read N- to C-terminus: ATP-dependent RNA helicase TDRD9 (1384 aa).

The segment at 35 to 60 is disordered; it reads EAPREEVQRSEEVPSEAPTAQAQDPV. Residues 36–46 are compositionally biased toward basic and acidic residues; it reads APREEVQRSEE. A Helicase ATP-binding domain is found at 144 to 310; that stretch reads ISLIESNSVV…FAVPVQNKMN (167 aa). An ATP-binding site is contributed by 157–164; sequence GATGSGKS. Residues 256–259 carry the DEAH box motif; it reads DEVH. Residues 379–546 enclose the Helicase C-terminal domain; the sequence is SGAQFVSERS…VLKVKLLDMG (168 aa). The Tudor domain maps to 946–1006; it reads HPHPDLVCLA…REIPCQLLEL (61 aa).

It belongs to the DEAD box helicase family. DEAH subfamily. Interacts with piRNA-associated proteins PIWIL1 and PIWIL4.

It is found in the cytoplasm. The protein localises to the nucleus. It carries out the reaction ATP + H2O = ADP + phosphate + H(+). Functionally, ATP-binding RNA helicase which plays a central role during spermatogenesis by repressing transposable elements and preventing their mobilization, which is essential for the germline integrity. Acts via the piRNA metabolic process, which mediates the repression of transposable elements during meiosis by forming complexes composed of piRNAs and Piwi proteins and governs the methylation and subsequent repression of transposons. Acts downstream of piRNA biogenesis: exclusively required for transposon silencing in the nucleus, suggesting that it acts as a nuclear effector in the nucleus together with PIWIL4. This chain is ATP-dependent RNA helicase TDRD9, found in Rattus norvegicus (Rat).